The following is a 227-amino-acid chain: 2,3-bisphosphoglycerate-dependent phosphoglycerate mutase (227 aa).

Residues 7–14 (RHGQSEWN), 20–21 (TG), arginine 59, 86–89 (ERHY), lysine 97, 113–114 (RR), and 182–183 (GN) each bind substrate. The active-site Tele-phosphohistidine intermediate is the histidine 8. Glutamate 86 (proton donor/acceptor) is an active-site residue.

Belongs to the phosphoglycerate mutase family. BPG-dependent PGAM subfamily. In terms of assembly, homodimer.

The catalysed reaction is (2R)-2-phosphoglycerate = (2R)-3-phosphoglycerate. It participates in carbohydrate degradation; glycolysis; pyruvate from D-glyceraldehyde 3-phosphate: step 3/5. In terms of biological role, catalyzes the interconversion of 2-phosphoglycerate and 3-phosphoglycerate. The protein is 2,3-bisphosphoglycerate-dependent phosphoglycerate mutase of Neisseria meningitidis serogroup A / serotype 4A (strain DSM 15465 / Z2491).